A 381-amino-acid chain; its full sequence is Cytochrome b (381 aa).

Helical transmembrane passes span 33–53 (FGSLLGMCLIIQILTGLFLAM), 77–98 (WLLRNLHANGASMFFMCLFLHV), 113–133 (WNIGVILLLTVMATAFVGYVL), and 178–198 (FFAFHFILPFIIMALAVVHLL). Positions 83 and 97 each coordinate heme b. Heme b is bound by residues histidine 182 and histidine 196. Histidine 201 lines the a ubiquinone pocket. 4 helical membrane passes run 226-246 (IKDALGFMLLLLVLLLLALFS), 288-308 (LGGVLAVLASILILLIIPLLH), 320-340 (VSQTLFWILTANLITLTWIGG), and 347-367 (FIIIGQLAPMPYFLLILVMMP).

Belongs to the cytochrome b family. As to quaternary structure, the cytochrome bc1 complex contains 11 subunits: 3 respiratory subunits (MT-CYB, CYC1 and UQCRFS1), 2 core proteins (UQCRC1 and UQCRC2) and 6 low-molecular weight proteins (UQCRH/QCR6, UQCRB/QCR7, UQCRQ/QCR8, UQCR10/QCR9, UQCR11/QCR10 and a cleavage product of UQCRFS1). This cytochrome bc1 complex then forms a dimer. It depends on heme b as a cofactor.

It localises to the mitochondrion inner membrane. In terms of biological role, component of the ubiquinol-cytochrome c reductase complex (complex III or cytochrome b-c1 complex) that is part of the mitochondrial respiratory chain. The b-c1 complex mediates electron transfer from ubiquinol to cytochrome c. Contributes to the generation of a proton gradient across the mitochondrial membrane that is then used for ATP synthesis. This Dasyurus hallucatus (Northern quoll) protein is Cytochrome b (MT-CYB).